The primary structure comprises 509 residues: Maturase K (509 aa).

It belongs to the intron maturase 2 family. MatK subfamily.

Its subcellular location is the plastid. It localises to the chloroplast. Usually encoded in the trnK tRNA gene intron. Probably assists in splicing its own and other chloroplast group II introns. The chain is Maturase K from Amentotaxus argotaenia (Chinese flowering yew).